The sequence spans 796 residues: Protein translocase subunit SecA 2 (796 aa).

Residues glutamine 84, 102 to 106, and aspartate 496 each bind ATP; that span reads GEGKT.

It belongs to the SecA family. In terms of assembly, monomer and homodimer. Part of the essential Sec protein translocation apparatus which comprises SecA, SecYEG and auxiliary proteins SecDF. Other proteins may also be involved.

The protein resides in the cell membrane. It is found in the cytoplasm. The catalysed reaction is ATP + H2O + cellular proteinSide 1 = ADP + phosphate + cellular proteinSide 2.. In terms of biological role, part of the Sec protein translocase complex. Interacts with the SecYEG preprotein conducting channel. Has a central role in coupling the hydrolysis of ATP to the transfer of proteins into and across the cell membrane, serving as an ATP-driven molecular motor driving the stepwise translocation of polypeptide chains across the membrane. The protein is Protein translocase subunit SecA 2 of Staphylococcus epidermidis (strain ATCC 12228 / FDA PCI 1200).